The chain runs to 688 residues: MNENKGNFANKKMIKRAVKDSFIKLSPKTQMENPVMFLVYISSILTTVLYAVSLVGIRDSKSSFILGITIILWITVLFANFAEAIAEGRGKAQADSLRAAKKDVEAHKIISLEKKDEITKVSSALLKKGDIVIVVAGEQVPADGEVIDGAASVDESAITGESAPVIRESGGDRSAVTGGTTVISDRLIIQVTSEAGESFLDKMISMVEGAARKKTPNEIALQILLISLTIIFLLVTVSLYSYSIFSANQAGVVNPISVTSLVALLVCLAPTTIGALLSSIGIAGMSRLNQANVLAMSGRAIEAAGDVDILMLDKTGTITLGNREACEFIPVNRVDENELADAAQLSSLADETPEGRSIVVLAKEKFGIRGRNIRESNMEFIPFTAKTRMSGVNYNNSEIRKGAAETVKDYVISRGGYYSKECDEIVARISNKGGTPLVVAKDNKVLGVVYLKDIIKQGVQEKFADLRKMGIKTIMITGDNPLTAAAIAAEAGVDDFLAEATPEGKLEMIRDFQVKGHLVAMTGDGTNDAPALAQADVAVAMNTGTQAAKEAGNMVDLDSSPTKLIDIVRIGKQLLMTRGSLTTFSIANDLAKYFAIIPALFIGLYPGLSALNIMNLHSAESAIFSAIIYNALIIVALIPLALKGVKYREVSAGKLLSRNLLVYGLGGIIVPFIAIKVIDVLITAIGIV.

4 helical membrane passes run 37–57 (FLVY…LVGI), 65–85 (ILGI…AEAI), 219–239 (IALQ…TVSL), and 262–282 (VALL…SIGI). D313 functions as the 4-aspartylphosphate intermediate in the catalytic mechanism. ATP-binding positions include D350, E354, 383 to 390 (FTAKTRMS), and K401. Mg(2+) is bound by residues D524 and D528. 3 consecutive transmembrane segments (helical) span residues 594–614 (FAII…LNIM), 622–642 (AIFS…PLAL), and 668–688 (IIVP…IGIV).

This sequence belongs to the cation transport ATPase (P-type) (TC 3.A.3) family. Type IA subfamily. As to quaternary structure, the system is composed of three essential subunits: KdpA, KdpB and KdpC.

It is found in the cell membrane. The enzyme catalyses K(+)(out) + ATP + H2O = K(+)(in) + ADP + phosphate + H(+). Functionally, part of the high-affinity ATP-driven potassium transport (or Kdp) system, which catalyzes the hydrolysis of ATP coupled with the electrogenic transport of potassium into the cytoplasm. This subunit is responsible for energy coupling to the transport system and for the release of the potassium ions to the cytoplasm. In Clostridium botulinum (strain Eklund 17B / Type B), this protein is Potassium-transporting ATPase ATP-binding subunit.